We begin with the raw amino-acid sequence, 859 residues long: Cadherin-related family member 1 (859 aa).

Positions Met-1–Ala-21 are cleaved as a signal peptide. Residues Asn-22 to Lys-701 are Extracellular-facing. 6 consecutive Cadherin domains span residues Asn-36 to Phe-135, Ile-136 to Phe-247, Val-248 to Phe-354, Pro-360 to Phe-473, Thr-474 to Phe-577, and Asp-569 to Phe-691. Asn-58 and Asn-89 each carry an N-linked (GlcNAc...) asparagine glycan. The N-linked (GlcNAc...) asparagine glycan is linked to Asn-288. A helical membrane pass occupies residues Ala-702–Thr-722. Topologically, residues Ala-723–Ile-859 are cytoplasmic. Residues Pro-793–Ser-838 form a disordered region. Positions Met-805–Gly-816 are enriched in polar residues.

As to quaternary structure, interacts with PROM1. In terms of processing, undergoes proteolytic cleavage; produces a soluble 95 kDa N-terminal fragment and a 25 kDa cell-associated C-terminal fragment. Expressed in cone and rod photoreceptor cells (at protein level). Expressed in photoreceptor cells of the outer nuclear layer of the retina. Expressed in mitral and tufted cells in the olfactory bulb.

It is found in the cell membrane. Potential calcium-dependent cell-adhesion protein. May be required for the structural integrity of the outer segment (OS) of photoreceptor cells. This is Cadherin-related family member 1 (Cdhr1) from Mus musculus (Mouse).